Consider the following 72-residue polypeptide: Probable transcription factor elt-4 (72 aa).

The GATA-type zinc-finger motif lies at 16-40; the sequence is CSNCNGTNTTLWRRKAEGDPVCNAC.

It is found in the nucleus. Functionally, probable transcription factor. Plays a role in regulating heme-dependent expression of heme transporter hrg-1. Modulates lifespan in a daf-16-dependent manner. This is Probable transcription factor elt-4 from Caenorhabditis elegans.